A 1061-amino-acid polypeptide reads, in one-letter code: Eukaryotic translation initiation factor 3 subunit A (1061 aa).

Residues 114–126 (QSSIEATTGSSSV) show a composition bias toward polar residues. The segment at 114-133 (QSSIEATTGSSSVEDLEASE) is disordered. The region spanning 339–523 (LQKAATFVVL…GVLSFDVDVF (185 aa)) is the PCI domain. Coiled coils occupy residues 609–724 (EVIQ…KRLD) and 789–906 (RADL…AAAA). Positions 828–901 (REKREREEKE…EAMARRRAEK (74 aa)) are enriched in basic and acidic residues. The tract at residues 828-1061 (REKREREEKE…KYVPKFRREG (234 aa)) is disordered. 2 stretches are compositionally biased toward pro residues: residues 950–962 (SGPP…PPPI) and 1000–1011 (APPPERSGPPPR).

This sequence belongs to the eIF-3 subunit A family. In terms of assembly, component of the eukaryotic translation initiation factor 3 (eIF-3) complex.

Its subcellular location is the cytoplasm. In terms of biological role, RNA-binding component of the eukaryotic translation initiation factor 3 (eIF-3) complex, which is involved in protein synthesis of a specialized repertoire of mRNAs and, together with other initiation factors, stimulates binding of mRNA and methionyl-tRNAi to the 40S ribosome. The eIF-3 complex specifically targets and initiates translation of a subset of mRNAs involved in cell proliferation. The protein is Eukaryotic translation initiation factor 3 subunit A of Chaetomium globosum (strain ATCC 6205 / CBS 148.51 / DSM 1962 / NBRC 6347 / NRRL 1970) (Soil fungus).